A 259-amino-acid polypeptide reads, in one-letter code: Submandibular glandular kallikrein-9 (259 aa).

The N-terminal stretch at 1–18 (MWFLILFLALSLGQIDAA) is a signal peptide. Residues 19–24 (PPGQSR) constitute a propeptide, activation peptide. Residues 25–256 (VVGGYNCETN…FTSWIKKVMK (232 aa)) form the Peptidase S1 domain. 5 cysteine pairs are disulfide-bonded: Cys31/Cys171, Cys48/Cys64, Cys150/Cys217, Cys182/Cys196, and Cys207/Cys232. His63 (charge relay system) is an active-site residue. Asn106 carries an N-linked (GlcNAc...) asparagine glycan. Residue Asp118 is the Charge relay system of the active site. Ser211 (charge relay system) is an active-site residue.

This sequence belongs to the peptidase S1 family. Kallikrein subfamily. Heterodimer of a light chain and heavy chain linked by a disulfide bond.

It catalyses the reaction Preferential cleavage of Arg-|-Xaa bonds in small molecule substrates. Highly selective action to release kallidin (lysyl-bradykinin) from kininogen involves hydrolysis of Met-|-Xaa or Leu-|-Xaa.. Its function is as follows. Glandular kallikreins cleave Met-Lys and Arg-Ser bonds in kininogen to release Lys-bradykinin. This enzyme has a vasoconstrictor activity. KLK-9 has both a chymotrypsin-like and a trypsin-like properties. This is Submandibular glandular kallikrein-9 (Klk9) from Rattus norvegicus (Rat).